A 983-amino-acid polypeptide reads, in one-letter code: UPF0182 protein KRH_08700 (983 aa).

The next 7 helical transmembrane spans lie at 22–42 (GALL…VGFT), 67–87 (VIGL…LSLW), 116–136 (VVMV…VATQ), 172–192 (LLIG…LLMH), 213–233 (VHLG…FWLD), 261–281 (GILA…GFIG), and 288–308 (IGAA…PWAI). Residues 893-959 (GAKTDTGAGV…DKAMKDGDWT (67 aa)) form a disordered region. A compositionally biased stretch (basic and acidic residues) spans 947–959 (QDSDKAMKDGDWT).

Belongs to the UPF0182 family.

It is found in the cell membrane. This chain is UPF0182 protein KRH_08700, found in Kocuria rhizophila (strain ATCC 9341 / DSM 348 / NBRC 103217 / DC2201).